Reading from the N-terminus, the 137-residue chain is Universal stress protein in QAH/OAS sulfhydrylase 3'region (137 aa).

This sequence belongs to the universal stress protein A family.

This is Universal stress protein in QAH/OAS sulfhydrylase 3'region from Thermus aquaticus.